We begin with the raw amino-acid sequence, 412 residues long: NADH-quinone oxidoreductase subunit D (412 aa).

This sequence belongs to the complex I 49 kDa subunit family. In terms of assembly, NDH-1 is composed of 14 different subunits. Subunits NuoB, C, D, E, F, and G constitute the peripheral sector of the complex.

The protein resides in the cell inner membrane. It catalyses the reaction a quinone + NADH + 5 H(+)(in) = a quinol + NAD(+) + 4 H(+)(out). In terms of biological role, NDH-1 shuttles electrons from NADH, via FMN and iron-sulfur (Fe-S) centers, to quinones in the respiratory chain. The immediate electron acceptor for the enzyme in this species is believed to be a menaquinone. Couples the redox reaction to proton translocation (for every two electrons transferred, four hydrogen ions are translocated across the cytoplasmic membrane), and thus conserves the redox energy in a proton gradient. In Flavobacterium psychrophilum (strain ATCC 49511 / DSM 21280 / CIP 103535 / JIP02/86), this protein is NADH-quinone oxidoreductase subunit D.